We begin with the raw amino-acid sequence, 280 residues long: Large ribosomal subunit protein uL2 (280 aa).

2 disordered regions span residues 33-55 and 199-266; these read LTEG…RRRG and DNSN…KASQ. Positions 209-219 are enriched in basic residues; it reads GRMRHKGKRPS.

This sequence belongs to the universal ribosomal protein uL2 family. Part of the 50S ribosomal subunit. Forms a bridge to the 30S subunit in the 70S ribosome.

Functionally, one of the primary rRNA binding proteins. Required for association of the 30S and 50S subunits to form the 70S ribosome, for tRNA binding and peptide bond formation. It has been suggested to have peptidyltransferase activity; this is somewhat controversial. Makes several contacts with the 16S rRNA in the 70S ribosome. The chain is Large ribosomal subunit protein uL2 from Ruegeria sp. (strain TM1040) (Silicibacter sp.).